The sequence spans 277 residues: Phosphatidylglycerol--prolipoprotein diacylglyceryl transferase (277 aa).

3 helical membrane passes run 17–37, 63–83, and 101–121; these read LAIHWYGLSYLAAFGLFMLLG, ILFLGVAGVVLGGRLGYCLFY, and GGMAFHGGLLGVIVAMLWFAH. R146 lines the a 1,2-diacyl-sn-glycero-3-phospho-(1'-sn-glycerol) pocket. A run of 3 helical transmembrane segments spans residues 182 to 202, 209 to 229, and 234 to 254; these read SQVYQFLLEGLLLFVLLWLYA, GQVAAAFLVGYGVLRFIAEQF, and AFLGILALGMSMGQWLCLPMI.

This sequence belongs to the Lgt family.

It is found in the cell inner membrane. It catalyses the reaction L-cysteinyl-[prolipoprotein] + a 1,2-diacyl-sn-glycero-3-phospho-(1'-sn-glycerol) = an S-1,2-diacyl-sn-glyceryl-L-cysteinyl-[prolipoprotein] + sn-glycerol 1-phosphate + H(+). Its pathway is protein modification; lipoprotein biosynthesis (diacylglyceryl transfer). Its function is as follows. Catalyzes the transfer of the diacylglyceryl group from phosphatidylglycerol to the sulfhydryl group of the N-terminal cysteine of a prolipoprotein, the first step in the formation of mature lipoproteins. The chain is Phosphatidylglycerol--prolipoprotein diacylglyceryl transferase from Verminephrobacter eiseniae (strain EF01-2).